Reading from the N-terminus, the 314-residue chain is Olfactory receptor 1468 (314 aa).

Topologically, residues 1–25 (MTEENQTVISQFLLLGLPIPSEHQH) are extracellular. The N-linked (GlcNAc...) asparagine glycan is linked to Asn5. A helical membrane pass occupies residues 26–49 (VFYALFLSMYLTTVLGNLIIIILI). At 50–57 (HLDSHLHT) the chain is on the cytoplasmic side. Residues 58-79 (PMYLFLSNLSFSDLCFSSVTMP) traverse the membrane as a helical segment. The Extracellular segment spans residues 80–100 (KLLQNMQSQVPSIPFAGCLTQ). Cys97 and Cys189 are oxidised to a cystine. A helical membrane pass occupies residues 101 to 120 (LYFYLYFADLESFLLVAMAY). The Cytoplasmic segment spans residues 121 to 139 (DRYVAICFPLHYMSIMSPK). The chain crosses the membrane as a helical span at residues 140-158 (LCVSLVVLSWVLTTFHAML). Residues 159 to 196 (HTLLMARLSFCADNMIPHFFCDISPLLKLSCSDTHVNE) are Extracellular-facing. The chain crosses the membrane as a helical span at residues 197-219 (LVIFVMGGLVIVIPFVLIIVSYA). Over 220–236 (RVVASILKVPSVRGIHK) the chain is Cytoplasmic. The helical transmembrane segment at 237–260 (IFSTCGSHLSVVSLFYGTIIGLYL) threads the bilayer. Residues 261 to 272 (CPSANNSTVKET) are Extracellular-facing. The chain crosses the membrane as a helical span at residues 273-292 (VMAMMYTVVTPMLNPFIYSL). The Cytoplasmic segment spans residues 293–314 (RNRDMKEALIRVLCKKKITFCL).

Belongs to the G-protein coupled receptor 1 family. Olfactory epithelium.

The protein localises to the cell membrane. Odorant receptor. The sequence is that of Olfactory receptor 1468 (Olr1468) from Rattus norvegicus (Rat).